The chain runs to 303 residues: Sulfate adenylyltransferase subunit 2 (303 aa).

Residues 281 to 303 (RQGRVIDHDSSGSMEKKKQEGYF) are disordered.

This sequence belongs to the PAPS reductase family. CysD subfamily. As to quaternary structure, heterodimer composed of CysD, the smaller subunit, and CysN.

It carries out the reaction sulfate + ATP + H(+) = adenosine 5'-phosphosulfate + diphosphate. The protein operates within sulfur metabolism; hydrogen sulfide biosynthesis; sulfite from sulfate: step 1/3. Functionally, with CysN forms the ATP sulfurylase (ATPS) that catalyzes the adenylation of sulfate producing adenosine 5'-phosphosulfate (APS) and diphosphate, the first enzymatic step in sulfur assimilation pathway. APS synthesis involves the formation of a high-energy phosphoric-sulfuric acid anhydride bond driven by GTP hydrolysis by CysN coupled to ATP hydrolysis by CysD. This chain is Sulfate adenylyltransferase subunit 2, found in Saccharophagus degradans (strain 2-40 / ATCC 43961 / DSM 17024).